The primary structure comprises 217 residues: GTP cyclohydrolase 1 (217 aa).

Zn(2+) is bound by residues C109, H112, and C180.

Belongs to the GTP cyclohydrolase I family. Toroid-shaped homodecamer, composed of two pentamers of five dimers.

It catalyses the reaction GTP + H2O = 7,8-dihydroneopterin 3'-triphosphate + formate + H(+). It functions in the pathway cofactor biosynthesis; 7,8-dihydroneopterin triphosphate biosynthesis; 7,8-dihydroneopterin triphosphate from GTP: step 1/1. This Photobacterium profundum (strain SS9) protein is GTP cyclohydrolase 1.